The primary structure comprises 366 residues: NADH-quinone oxidoreductase subunit D (366 aa).

This sequence belongs to the complex I 49 kDa subunit family. NDH-1 is composed of 14 different subunits. Subunits NuoB, C, D, E, F, and G constitute the peripheral sector of the complex.

It is found in the cell membrane. The catalysed reaction is a quinone + NADH + 5 H(+)(in) = a quinol + NAD(+) + 4 H(+)(out). In terms of biological role, NDH-1 shuttles electrons from NADH, via FMN and iron-sulfur (Fe-S) centers, to quinones in the respiratory chain. The immediate electron acceptor for the enzyme in this species is believed to be a menaquinone. Couples the redox reaction to proton translocation (for every two electrons transferred, four hydrogen ions are translocated across the cytoplasmic membrane), and thus conserves the redox energy in a proton gradient. This is NADH-quinone oxidoreductase subunit D from Desulforamulus reducens (strain ATCC BAA-1160 / DSM 100696 / MI-1) (Desulfotomaculum reducens).